The sequence spans 388 residues: Flap endonuclease 1 (388 aa).

The tract at residues 1-104 is N-domain; that stretch reads MGILGLSKLI…GELAKRAERR (104 aa). Position 34 (D34) interacts with Mg(2+). DNA-binding residues include R47 and R70. The Mg(2+) site is built by D86, E158, E160, D179, and D181. The segment at 122–253 is I-domain; it reads QIEKFNRRLV…KRAIELIKSY (132 aa). Residue E158 participates in DNA binding. DNA-binding residues include G231 and D233. D233 is a Mg(2+) binding site. The interaction with PCNA stretch occupies residues 336-344; that stretch reads TQVRLDSFF. Positions 355-388 are disordered; it reads AAAKRKAEESKKSANSKKAKIGGGSGAGRGRRPK.

It belongs to the XPG/RAD2 endonuclease family. FEN1 subfamily. As to quaternary structure, interacts with PCNA. Three molecules of FEN1 bind to one PCNA trimer with each molecule binding to one PCNA monomer. PCNA stimulates the nuclease activity without altering cleavage specificity. Mg(2+) serves as cofactor. Phosphorylated. Phosphorylation upon DNA damage induces relocalization to the nuclear plasma.

The protein resides in the nucleus. It localises to the nucleolus. The protein localises to the nucleoplasm. It is found in the mitochondrion. Its function is as follows. Structure-specific nuclease with 5'-flap endonuclease and 5'-3' exonuclease activities involved in DNA replication and repair. During DNA replication, cleaves the 5'-overhanging flap structure that is generated by displacement synthesis when DNA polymerase encounters the 5'-end of a downstream Okazaki fragment. It enters the flap from the 5'-end and then tracks to cleave the flap base, leaving a nick for ligation. Also involved in the long patch base excision repair (LP-BER) pathway, by cleaving within the apurinic/apyrimidinic (AP) site-terminated flap. Acts as a genome stabilization factor that prevents flaps from equilibrating into structures that lead to duplications and deletions. Also possesses 5'-3' exonuclease activity on nicked or gapped double-stranded DNA, and exhibits RNase H activity. Also involved in replication and repair of rDNA and in repairing mitochondrial DNA. The polypeptide is Flap endonuclease 1 (Drosophila grimshawi (Hawaiian fruit fly)).